We begin with the raw amino-acid sequence, 423 residues long: Site-specific recombinase Flp (423 aa).

Positions 136–422 (GNSHSKKMLK…DYLSSYINRR (287 aa)) constitute a Tyr recombinase Flp-type domain. Residue tyrosine 343 is the O-(3'-phospho-DNA)-tyrosine intermediate of the active site.

This sequence belongs to the 'phage' integrase family. In terms of assembly, homotetramer.

Part of the plasmid amplification system, which corrects any decrease in copy number caused by a rare missegregation event. Catalyzes the recombination between the large inverted repetitions of the 2-micron plasmid during plasmid replication. This recombination event changes the direction of one of the two replication forks in the bidirectionally replicating molecule, effectively resulting in multiple rounds of replication from a single initiation event. Binds specifically to the FLP recognition target (FRT) site where it induces DNA to bend. Three types of bend exist. Type I is approximately 60 degrees and results from 1 FLP molecule binding to 1 symmetry element. Type II is &gt;144 degrees and results from FLP molecules binding to symmetry elements a and b. Type III is approximately 65 degrees and results from FLP molecules binding to symmetry elements b and c. This Saccharomyces cerevisiae (strain ATCC 204508 / S288c) (Baker's yeast) protein is Site-specific recombinase Flp (FLP1).